The sequence spans 327 residues: Cell surface glycoprotein CD200 receptor 1 (327 aa).

The first 23 residues, 1–23, serve as a signal peptide directing secretion; that stretch reads MLCFWRTSHVAVLLIWGVFAAES. The Extracellular portion of the chain corresponds to 24–239; sequence SCPDKNQTMQ…GRGGDQLLGS (216 aa). The Ig-like V-type domain occupies 26–145; the sequence is PDKNQTMQNN…GNFQNIYDLQ (120 aa). Asn29, Asn34, Asn43, Asn96, Asn159, Asn187, Asn192, and Asn222 each carry an N-linked (GlcNAc...) asparagine glycan. Intrachain disulfides connect Cys58/Cys129 and Cys81/Cys97. Residues 147 to 226 enclose the Ig-like C2-type domain; that stretch reads LVPPEVTHFP…HLTTGNQSLS (80 aa). 2 disulfides stabilise this stretch: Cys164–Cys213 and Cys183–Cys201. A helical membrane pass occupies residues 240-260; that stretch reads YIQYIIPSIIILIIIGCICLL. Residues 261-327 lie on the Cytoplasmic side of the membrane; it reads KISGCRKCKL…DCLTLSAMGI (67 aa).

Belongs to the CD200R family. In terms of assembly, CD200 and CD200R1 interact via their respective N-terminal Ig-like domains. Phosphorylated on tyrosine residues. Post-translationally, highly N-glycosylated. In terms of tissue distribution, restricted to cells of the myeloid lineage.

It is found in the cell membrane. Functionally, inhibitory receptor for the CD200/OX2 cell surface glycoprotein. Limits inflammation by inhibiting the expression of pro-inflammatory molecules including TNF-alpha, interferons, and inducible nitric oxide synthase (iNOS) in response to selected stimuli. The protein is Cell surface glycoprotein CD200 receptor 1 (Cd200r1) of Rattus norvegicus (Rat).